Here is an 87-residue protein sequence, read N- to C-terminus: U1-theraphotoxin-Ct1a (87 aa).

The N-terminal stretch at 1-23 (MKTFTLIAILTCAVLVIFHAAAA) is a signal peptide. Residues 24–48 (EELEVQDVIQPEDTLTGLATLDEDR) constitute a propeptide that is removed on maturation.

The protein belongs to the neurotoxin 12 (Hwtx-2) family. 03 (juruin) subfamily. Post-translationally, contains 3 disulfide bonds. Two different connectivities are observed in similar proteins (C1-C3, C2-C5, C4-C6 or C1-C4, C2-C5, C3-C6). As to expression, expressed by the venom gland.

Its subcellular location is the secreted. Its function is as follows. This toxin causes paralysis and death to sheep blowflies. It may inhibit voltage-gated calcium channels. This is U1-theraphotoxin-Ct1a from Coremiocnemis tropix (Australian tarantula spider).